A 195-amino-acid polypeptide reads, in one-letter code: HTH-type transcriptional regulator BetI (195 aa).

The region spanning 8–68 is the HTH tetR-type domain; the sequence is SIRRRQLIDA…ATMRDITSQL (61 aa). Positions 31–50 form a DNA-binding region, H-T-H motif; that stretch reads TIAQIARRAGVSTGIISHYF.

Its pathway is amine and polyamine biosynthesis; betaine biosynthesis via choline pathway [regulation]. Functionally, repressor involved in the biosynthesis of the osmoprotectant glycine betaine. It represses transcription of the choline transporter BetT and the genes of BetAB involved in the synthesis of glycine betaine. This is HTH-type transcriptional regulator BetI from Escherichia coli O17:K52:H18 (strain UMN026 / ExPEC).